The chain runs to 365 residues: Peptide chain release factor 2 (365 aa).

The residue at position 251 (Gln-251) is an N5-methylglutamine.

The protein belongs to the prokaryotic/mitochondrial release factor family. Post-translationally, methylated by PrmC. Methylation increases the termination efficiency of RF2.

The protein localises to the cytoplasm. Functionally, peptide chain release factor 2 directs the termination of translation in response to the peptide chain termination codons UGA and UAA. This chain is Peptide chain release factor 2, found in Sulfurimonas denitrificans (strain ATCC 33889 / DSM 1251) (Thiomicrospira denitrificans (strain ATCC 33889 / DSM 1251)).